The sequence spans 181 residues: Histone H1 (181 aa).

Disordered regions lie at residues 1–23 (MTET…THPP) and 81–181 (TKGA…PKKK). Residues 8–19 (KPKKVSKPKAKP) are compositionally biased toward basic residues. An H15 domain is found at 20 to 94 (THPPTSVMVM…GASGSFKLAA (75 aa)). Basic residues-rich tracts occupy residues 103–119 (AVAK…KAAA) and 145–181 (KPKK…PKKK).

Belongs to the histone H1/H5 family.

It is found in the nucleus. Its subcellular location is the chromosome. Histones H1 are necessary for the condensation of nucleosome chains into higher-order structures. The chain is Histone H1 from Tigriopus californicus (Marine copepod).